Consider the following 274-residue polypeptide: MEIKMAKDYGFCFGVKRAIQIAEKNQNSLIFGSLIHNAKEINRLEKNFNVKIEEDPKKIPKNKSVIIRTHGIPKQDLEYLKNKGVKITDATCPYVIKPQQIVESMSKEGYQIVLFGDINHPEVKGVISYATNQALVINSLEELQEKKLQRKVALVSQTTKQTPQLLQIASYLVERCTEVRIFNTICNATSYNQKAALDLSKEVDIMIVVGGKTSSNTKQLLSIAKQHCEDSYLVEDENELELAWFKNKKLCGITAGASTPDWIIENVKQKISTI.

Cys-12 is a [4Fe-4S] cluster binding site. Residues His-36 and His-70 each coordinate (2E)-4-hydroxy-3-methylbut-2-enyl diphosphate. Residues His-36 and His-70 each coordinate dimethylallyl diphosphate. 2 residues coordinate isopentenyl diphosphate: His-36 and His-70. Cys-92 contributes to the [4Fe-4S] cluster binding site. A (2E)-4-hydroxy-3-methylbut-2-enyl diphosphate-binding site is contributed by His-120. A dimethylallyl diphosphate-binding site is contributed by His-120. Residue His-120 participates in isopentenyl diphosphate binding. The active-site Proton donor is the Glu-122. (2E)-4-hydroxy-3-methylbut-2-enyl diphosphate is bound at residue Thr-158. Cys-186 serves as a coordination point for [4Fe-4S] cluster. Ser-214, Ser-215, Asn-216, and Ser-258 together coordinate (2E)-4-hydroxy-3-methylbut-2-enyl diphosphate. Dimethylallyl diphosphate contacts are provided by Ser-214, Ser-215, Asn-216, and Ser-258. Ser-214, Ser-215, Asn-216, and Ser-258 together coordinate isopentenyl diphosphate.

The protein belongs to the IspH family. [4Fe-4S] cluster is required as a cofactor.

It carries out the reaction isopentenyl diphosphate + 2 oxidized [2Fe-2S]-[ferredoxin] + H2O = (2E)-4-hydroxy-3-methylbut-2-enyl diphosphate + 2 reduced [2Fe-2S]-[ferredoxin] + 2 H(+). The catalysed reaction is dimethylallyl diphosphate + 2 oxidized [2Fe-2S]-[ferredoxin] + H2O = (2E)-4-hydroxy-3-methylbut-2-enyl diphosphate + 2 reduced [2Fe-2S]-[ferredoxin] + 2 H(+). The protein operates within isoprenoid biosynthesis; dimethylallyl diphosphate biosynthesis; dimethylallyl diphosphate from (2E)-4-hydroxy-3-methylbutenyl diphosphate: step 1/1. It participates in isoprenoid biosynthesis; isopentenyl diphosphate biosynthesis via DXP pathway; isopentenyl diphosphate from 1-deoxy-D-xylulose 5-phosphate: step 6/6. Catalyzes the conversion of 1-hydroxy-2-methyl-2-(E)-butenyl 4-diphosphate (HMBPP) into a mixture of isopentenyl diphosphate (IPP) and dimethylallyl diphosphate (DMAPP). Acts in the terminal step of the DOXP/MEP pathway for isoprenoid precursor biosynthesis. This is 4-hydroxy-3-methylbut-2-enyl diphosphate reductase from Helicobacter pylori (strain Shi470).